A 67-amino-acid polypeptide reads, in one-letter code: DNA-directed RNA polymerases I, II, and III subunit RPABC5 (67 aa).

Residues cysteine 7, cysteine 10, cysteine 44, and cysteine 45 each contribute to the Zn(2+) site.

It belongs to the archaeal Rpo10/eukaryotic RPB10 RNA polymerase subunit family. As to quaternary structure, component of the RNA polymerase I (Pol I), RNA polymerase II (Pol II) and RNA polymerase III (Pol III) complexes consisting of at least 13, 12 and 17 subunits, respectively.

Its subcellular location is the nucleus. Functionally, DNA-dependent RNA polymerase catalyzes the transcription of DNA into RNA using the four ribonucleoside triphosphates as substrates. Common component of RNA polymerases I, II and III which synthesize ribosomal RNA precursors, mRNA precursors and many functional non-coding RNAs, and a small RNAs, such as 5S rRNA and tRNAs, respectively. Pol II is the central component of the basal RNA polymerase II transcription machinery. Pols are composed of mobile elements that move relative to each other. In Pol II, RBP10 is part of the core element with the central large cleft. The protein is DNA-directed RNA polymerases I, II, and III subunit RPABC5 of Caenorhabditis briggsae.